Reading from the N-terminus, the 284-residue chain is 2,3,4,5-tetrahydropyridine-2,6-dicarboxylate N-succinyltransferase (284 aa).

Substrate-binding residues include arginine 111 and aspartate 148.

It belongs to the transferase hexapeptide repeat family. Homotrimer.

It is found in the cytoplasm. The catalysed reaction is (S)-2,3,4,5-tetrahydrodipicolinate + succinyl-CoA + H2O = (S)-2-succinylamino-6-oxoheptanedioate + CoA. It functions in the pathway amino-acid biosynthesis; L-lysine biosynthesis via DAP pathway; LL-2,6-diaminopimelate from (S)-tetrahydrodipicolinate (succinylase route): step 1/3. In Brucella melitensis biotype 2 (strain ATCC 23457), this protein is 2,3,4,5-tetrahydropyridine-2,6-dicarboxylate N-succinyltransferase.